The sequence spans 371 residues: 3-methyl-D-ornithine--L-lysine ligase (371 aa).

Position 18 (K18) interacts with ATP. An L-lysine-binding site is contributed by 19-20 (LQ). ATP-binding positions include D39, 57–58 (NI), and 80–81 (EN). E80 lines the L-lysine pocket. Residues 93–277 (EKFSCPVLFD…LIELLFRAFN (185 aa)) enclose the ATP-grasp domain. ADP is bound by residues K112, K139, S146, and 168–171 (EEYV). Residues 177–179 (SLE) and D233 contribute to the D-ornithine site. Mg(2+) contacts are provided by E235, E247, and D249. ADP is bound at residue E247. D-ornithine is bound by residues 251 to 256 (RFPSQT) and E310. 2 residues coordinate L-lysine: S254 and E310.

Belongs to the PylC family. Mg(2+) is required as a cofactor.

The enzyme catalyses (3R)-3-methyl-D-ornithine + L-lysine + ATP = (3R)-3-methyl-D-ornithyl-N(6)-L-lysine + ADP + phosphate + H(+). It participates in amino-acid biosynthesis; L-pyrrolysine biosynthesis. In terms of biological role, is required for the biosynthesis of pyrrolysine. Catalyzes the ATP-dependent ligation between (3R)-3-methyl-D-ornithine and L-lysine, leading to (3R)-3-methyl-D-ornithyl-N6-L-lysine. Is also involved in the synthesis of pyrroline-carboxy-lysine (Pcl), a demethylated form of pyrrolysine that is generated by the pyrrolysine biosynthetic enzymes when the growth media is supplemented with D-ornithine. This Methanosarcina mazei (strain ATCC BAA-159 / DSM 3647 / Goe1 / Go1 / JCM 11833 / OCM 88) (Methanosarcina frisia) protein is 3-methyl-D-ornithine--L-lysine ligase.